Reading from the N-terminus, the 262-residue chain is F-actin-capping protein subunit alpha (262 aa).

The protein belongs to the F-actin-capping protein alpha subunit family. As to quaternary structure, heterodimer of an alpha and a beta subunit.

It localises to the cytoplasm. The protein localises to the cytoskeleton. In terms of biological role, F-actin-capping proteins bind in a Ca(2+)-independent manner to the fast growing ends of actin filaments (barbed end) thereby blocking the exchange of subunits at these ends. Unlike other capping proteins (such as gelsolin and severin), these proteins do not sever actin filaments. This is F-actin-capping protein subunit alpha (CAP1) from Yarrowia lipolytica (strain CLIB 122 / E 150) (Yeast).